The sequence spans 138 residues: Large ribosomal subunit protein uL14 (138 aa).

It belongs to the universal ribosomal protein uL14 family. As to quaternary structure, part of the 50S ribosomal subunit. Forms a cluster with proteins L3 and L24e, part of which may contact the 16S rRNA in 2 intersubunit bridges. Contacts initiation factor aIF-6.

The protein localises to the cytoplasm. Its function is as follows. Binds to 23S rRNA. Forms part of two intersubunit bridges in the 70S ribosome. This is Large ribosomal subunit protein uL14 from Saccharolobus solfataricus (strain ATCC 35092 / DSM 1617 / JCM 11322 / P2) (Sulfolobus solfataricus).